Consider the following 164-residue polypeptide: Urease subunit beta (164 aa).

Polar residues-rich tracts occupy residues 1 to 10 (MSTKTNSTKA) and 20 to 30 (TNRGTKSSAGY). A disordered region spans residues 1 to 30 (MSTKTNSTKATSEKTDSLKTNRGTKSSAGY).

It belongs to the urease beta subunit family. In terms of assembly, heterotrimer of UreA (gamma), UreB (beta) and UreC (alpha) subunits. Three heterotrimers associate to form the active enzyme.

The protein resides in the cytoplasm. It catalyses the reaction urea + 2 H2O + H(+) = hydrogencarbonate + 2 NH4(+). It functions in the pathway nitrogen metabolism; urea degradation; CO(2) and NH(3) from urea (urease route): step 1/1. Functionally, expression of the urease operon increases the likelihood of bacterial survival by contributing to acid resistance in vitro and in vivo in BALB/c mice. Y.enterocolitica enters the body via an oral path and must survive the acidic stomach before being able to colonize the intestinal mucosa. The chain is Urease subunit beta from Yersinia enterocolitica.